A 172-amino-acid polypeptide reads, in one-letter code: MAKMQAKVQADERDDGLREKMISVNRVTKVVKGGRILGFAALTVVGDGDGRVGMGKGKAKEVPVAVQKAMEQARRNMFKVPLKNGTLQHEVHGKHGASTVLLAPAKDGTGVIAGGPMRAVFDVMGVQNVVAKSHGSTNPYNLVRATLDGLRKQSTPADIAAKRGKSVEEILG.

Positions 17-80 constitute an S5 DRBM domain; sequence LREKMISVNR…EQARRNMFKV (64 aa).

Belongs to the universal ribosomal protein uS5 family. In terms of assembly, part of the 30S ribosomal subunit. Contacts proteins S4 and S8.

In terms of biological role, with S4 and S12 plays an important role in translational accuracy. Functionally, located at the back of the 30S subunit body where it stabilizes the conformation of the head with respect to the body. This chain is Small ribosomal subunit protein uS5, found in Burkholderia pseudomallei (strain 1106a).